Here is a 597-residue protein sequence, read N- to C-terminus: MGGEAPEARRLDRAMSFGGAGSIPEEALHLVLGYVDDPRDREAVSLVCRRWHRIDALTRKHVTVPFCYAASPAHLLARFPRLESLAVKGKPRAAMYGLIPEDWGAYARPWVAELAAPLECLKALHLRRMVVTDDDLAALVRARGHMLQELKLDKCSGFSTDALRLVARSCRSLRTLFLEECSIADNGTEWLHDLAVNNPVLETLNFHMTELTVVPADLELLAKKCKSLISLKISDCDFSDLIGFFRMAASLQEFAGGAFIEQGELTKYGNVKFPSRLCSLGLTYMGTNEMPIIFPFSALLKKLDLQYTFLTTEDHCQLIAKCPNLLVLAVRNVIGDRGLGVVADTCKKLQRLRVERGDDDPGLQEEQGGVSQVGLTTVAVGCRELEYIAAYVSDITNGALESIGTFCKNLCDFRLVLLDREERITDLPLDNGVRALLRGCTKLRRFALYLRPGGLSDTGLGYIGQYSGIIQYMLLGNVGETDDGLIRFALGCENLRKLELRSCCFSEQALARAIRSMPSLRYVWVQGYKASKTGHDLMLMARPFWNIEFTPPSSENANRMREDGEPCVDSQAQILAYYSLAGKRSDCPRSVVPLYPA.

The 43-residue stretch at 22–64 (SIPEEALHLVLGYVDDPRDREAVSLVCRRWHRIDALTRKHVTV) folds into the F-box domain. The jasmonate site is built by arginine 92, arginine 353, tyrosine 391, arginine 414, and arginine 501.

As to quaternary structure, interacts with TIFY10C/JAZ8 in a coronatine-dependent manner. Interacts with TIFY3/JAZ1, TIFY6A/JAZ3, TIFY6B/JAZ4, TIFY10A/JAZ6, TIFY10B/JAZ7, TIFY11A/JAZ9, TIFY11B/JAZ10, TIFY11C/JAZ11 and TIFY11D/JAZ12 in a coronatine-dependent manner. As to expression, expressed in roots, shoots, leaf sheaths and leaf blades.

Its function is as follows. Involved in jasmonate (JA) signaling. Required for jasmonate signaling in plant defense responses. Can complement Arabidopsis coi1-1 mutant and restore jasmonate signaling. Component of SCF(COI1) E3 ubiquitin ligase complexes, which may mediate the ubiquitination and subsequent proteasomal degradation of target proteins, including TIFY/JAZ family. This chain is Coronatine-insensitive protein homolog 1b, found in Oryza sativa subsp. japonica (Rice).